We begin with the raw amino-acid sequence, 840 residues long: Probable sulfate permease C869.05c (840 aa).

12 consecutive transmembrane segments (helical) span residues 120-140, 148-168, 173-193, 208-228, 230-250, 278-298, 315-335, 410-430, 447-467, 470-490, 505-525, and 527-547; these read WLIN…PQGM, LPSE…CFFA, VSIG…ANVM, LALL…GFII, FIPV…ILSG, LPDT…LFFT, AFFL…TAIS, LIAM…PATG, IAGI…TDAF, IPNA…ILPM, CIFF…GIYV, and VCLA…SFLG. The STAS domain occupies 578 to 733; sequence NLEIQSPPPG…CVEVAAPLRD (156 aa). Ser823 carries the phosphoserine modification.

This sequence belongs to the SLC26A/SulP transporter (TC 2.A.53) family.

The protein localises to the membrane. High affinity uptake of sulfate into the cell. This chain is Probable sulfate permease C869.05c, found in Schizosaccharomyces pombe (strain 972 / ATCC 24843) (Fission yeast).